The sequence spans 485 residues: Proline--tRNA ligase (485 aa).

It belongs to the class-II aminoacyl-tRNA synthetase family. ProS type 3 subfamily. In terms of assembly, homodimer.

The protein localises to the cytoplasm. The enzyme catalyses tRNA(Pro) + L-proline + ATP = L-prolyl-tRNA(Pro) + AMP + diphosphate. In terms of biological role, catalyzes the attachment of proline to tRNA(Pro) in a two-step reaction: proline is first activated by ATP to form Pro-AMP and then transferred to the acceptor end of tRNA(Pro). The protein is Proline--tRNA ligase of Aeropyrum pernix (strain ATCC 700893 / DSM 11879 / JCM 9820 / NBRC 100138 / K1).